A 273-amino-acid polypeptide reads, in one-letter code: Undecaprenyl-diphosphatase (273 aa).

7 consecutive transmembrane segments (helical) span residues 6–26, 45–65, 90–110, 116–136, 190–210, 222–242, and 252–272; these read SLLIAAILGVVEGLTEFLPVS, AKTFEVVIQLGSILAVVVMFW, LTLIHILLGMIPAVVLGLVFH, LFNPINVMYTLVVGGLLLIAA, YAASEFSFLLAVPMMMGATVL, ADIPMFAVGFVTAFVVALIAI, and ISFIPFAIYRFVVAAAVYVVF.

Belongs to the UppP family.

The protein resides in the cell inner membrane. It carries out the reaction di-trans,octa-cis-undecaprenyl diphosphate + H2O = di-trans,octa-cis-undecaprenyl phosphate + phosphate + H(+). In terms of biological role, catalyzes the dephosphorylation of undecaprenyl diphosphate (UPP). Confers resistance to bacitracin. This Salmonella paratyphi C (strain RKS4594) protein is Undecaprenyl-diphosphatase.